Here is a 157-residue protein sequence, read N- to C-terminus: Protein UXT (157 aa).

It belongs to the UXT family. Homohexamer. Component of the PAQosome complex which is responsible for the biogenesis of several protein complexes and which consists of R2TP complex members RUVBL1, RUVBL2, RPAP3 and PIH1D1, URI complex members PFDN2, PFDN6, PDRG1, UXT and URI1 as well as ASDURF, POLR2E and DNAAF10/WDR92. Interacts with LRPPRC. Interacts with androgen receptor AR (via N-terminus). Interacts with estrogen receptor ESR1; the interaction relocalizes ESR1 from the nucleus to the cytoplasm. In the nucleus, interacts specifically with RELA (via RHD domain) and forms a dynamic complex with NF-kappa-B and is recruited to the NF-kappa-B enhanceosome upon stimulation. Interacts with MECOM. Interacts with URI1. In terms of assembly, part of complex I composed of TNF-alpha receptor TNFRSF1A, TRADD, TRAF2 and RIPK1 formed in response to TNF-alpha stimulation. Within the complex, interacts (via TPQE motif) with TRAF2; the interaction prevents the recruitment of FADD and CASP8/caspase 8 to complex I. In terms of processing, ubiquitinated by E3 ubiquitin-protein ligase complex containing FBXO7; leading to proteasomal degradation. In terms of tissue distribution, ubiquitous. Expressed in prostate epithelial cells. Expressed in mammary epithelial cells. Highest levels in the heart, skeletal muscle, pancreas, kidney, liver, adrenal gland, peripheral blood leukocytes, lymph node, prostate, and thyroid and the lowest levels in bladder and uterus. Overexpressed in a number of tumor tissues.

It is found in the cytoplasm. Its subcellular location is the nucleus. The protein localises to the cytoskeleton. It localises to the microtubule organizing center. The protein resides in the centrosome. It is found in the spindle pole. Its function is as follows. Involved in gene transcription regulation. Acts in concert with the corepressor URI1 to regulate androgen receptor AR-mediated transcription. Together with URI1, associates with chromatin to the NKX3-1 promoter region. Negatively regulates the transcriptional activity of the estrogen receptor ESR1 by inducing its translocation into the cytoplasm. May act as nuclear chaperone that facilitates the formation of the NF-kappa-B enhanceosome and thus positively regulates NF-kappa-B transcription activity. Potential component of mitochondrial-associated LRPPRC, a multidomain organizer that potentially integrates mitochondria and the microtubular cytoskeleton with chromosome remodeling. Increasing concentrations of UXT contributes to progressive aggregation of mitochondria and cell death potentially through its association with LRPPRC. Suppresses cell transformation and it might mediate this function by interaction and inhibition of the biological activity of cell proliferation and survival stimulatory factors like MECOM. In terms of biological role, plays a role in protecting cells against TNF-alpha-induced apoptosis by preventing the recruitment of FADD and caspase 8 to the apoptotic complex I, composed of TRADD, TRAF2 and RIPK1/RIP. The chain is Protein UXT (UXT) from Homo sapiens (Human).